The primary structure comprises 423 residues: tRNA(Ile2) 2-agmatinylcytidine synthetase TiaS (423 aa).

The OB DNA-binding region spans 273-347; the sequence is VIVYGRVVEE…GINIEKIKIL (75 aa).

Belongs to the TiaS family.

The protein resides in the cytoplasm. The catalysed reaction is cytidine(34) in tRNA(Ile2) + agmatine + ATP + H2O = 2-agmatinylcytidine(34) in tRNA(Ile2) + AMP + 2 phosphate + 2 H(+). Its function is as follows. ATP-dependent agmatine transferase that catalyzes the formation of 2-agmatinylcytidine (agm2C) at the wobble position (C34) of tRNA(Ile2), converting the codon specificity from AUG to AUA. The polypeptide is tRNA(Ile2) 2-agmatinylcytidine synthetase TiaS (Methanocaldococcus jannaschii (strain ATCC 43067 / DSM 2661 / JAL-1 / JCM 10045 / NBRC 100440) (Methanococcus jannaschii)).